A 177-amino-acid polypeptide reads, in one-letter code: Prorelaxin (177 aa).

A signal peptide spans 1 to 25 (MLRWFLSHLLGVWLLLSQLPREIPA). Disulfide bonds link cysteine 34/cysteine 164, cysteine 46/cysteine 177, and cysteine 163/cysteine 168. Positions 63–149 (QISEPLAEVV…KSLSKLDKHP (87 aa)) are cleaved as a propeptide — connecting peptide.

Belongs to the insulin family. Heterodimer of a B chain and an A chain linked by two disulfide bonds. In terms of tissue distribution, placenta; syncytiotrophoblast.

It is found in the secreted. Its function is as follows. Relaxin is an ovarian hormone that acts with estrogen to produce dilatation of the birth canal in many mammals. This is Prorelaxin (RLN) from Canis lupus familiaris (Dog).